Here is a 396-residue protein sequence, read N- to C-terminus: Pectate lyase 5 (396 aa).

Positions 1–25 (MGIKHCCYILYFTLALVTLLQPVRS) are cleaved as a signal peptide. N-linked (GlcNAc...) asparagine glycosylation occurs at asparagine 36. A disulfide bridge links cysteine 53 with cysteine 70. Ca(2+)-binding residues include aspartate 193, aspartate 217, and aspartate 221. Residue arginine 273 is part of the active site.

Belongs to the polysaccharide lyase 1 family. Amb a subfamily. In terms of assembly, monomer. Requires Ca(2+) as cofactor. In terms of processing, the N-terminus is blocked. Pollen and flowers.

The catalysed reaction is Eliminative cleavage of (1-&gt;4)-alpha-D-galacturonan to give oligosaccharides with 4-deoxy-alpha-D-galact-4-enuronosyl groups at their non-reducing ends.. It functions in the pathway glycan metabolism; pectin degradation; 2-dehydro-3-deoxy-D-gluconate from pectin: step 2/5. Functionally, has pectate lyase activity. The chain is Pectate lyase 5 from Ambrosia artemisiifolia (Common ragweed).